The following is a 355-amino-acid chain: GTPase Obg (355 aa).

Residues 1–159 enclose the Obg domain; it reads MKLVDEAEIL…RLLKLELKLL (159 aa). The OBG-type G domain maps to 160-342; that stretch reads ADVGLLGFPN…IMKDVMAFFD (183 aa). Residues 166–173, 191–195, 213–216, 292–295, and 323–325 each bind GTP; these read GFPNAGKS, FTTLY, DVPG, NKAD, and SAL. Residues Ser173 and Thr193 each coordinate Mg(2+).

Belongs to the TRAFAC class OBG-HflX-like GTPase superfamily. OBG GTPase family. As to quaternary structure, monomer. Mg(2+) is required as a cofactor.

It is found in the cytoplasm. An essential GTPase which binds GTP, GDP and possibly (p)ppGpp with moderate affinity, with high nucleotide exchange rates and a fairly low GTP hydrolysis rate. Plays a role in control of the cell cycle, stress response, ribosome biogenesis and in those bacteria that undergo differentiation, in morphogenesis control. The polypeptide is GTPase Obg (Xanthomonas axonopodis pv. citri (strain 306)).